Consider the following 500-residue polypeptide: MNDFPWLTIIVVFPISAGSLMLFLPHRGNKVNKWYTICICILELLLTTYAFCYNFKMDDPLIQLSEDYKWINFLDFYWRMGIDGLSIGTILLTGFITTLATLAAFPVTRDSKLFHFLMLAMYSGQIGSFSSRDLLLFFIMWELELIPVYLLLSMWGGKKRLYSATKFILYTAGSSIFLLIGVLGISLYGSNEPTLNLELLANQSYPVTLEILFYIGFLIAFAVKSPIIPLHTWLPDTHGEAHYSTCMLLAGILLKMGAYGLVRINMELLPHAHSMFSPWLMVVGTIQIIYAASTSPGQRNLKKRIAYSSVSHMGFIIIGISSITDPGLNGAILQIISHGFIGAALFFLAGTSYDRIRLVYLDEMGGMAISIPKIFTMFTILSMASLALPGMSGFVAELIVFFGIITSQKYFLISKILIIFVMAIGMILTPIYLLSMSRQMFYGYKLINVKNFSFFDSGPRELFLSISILLPIIGIGIYPDFVLSLASDKVESILSNYFYG.

14 consecutive transmembrane segments (helical) span residues Phe4–Leu24, Tyr35–Phe55, Ile87–Val107, Leu113–Ser130, Leu134–Met154, Phe167–Leu187, Ile211–His231, His242–Val262, Ala272–Ala292, Ile305–Asp325, Gly330–Gly350, Leu386–Thr406, Ile416–Met436, and Leu462–Val482.

This sequence belongs to the complex I subunit 4 family.

Its subcellular location is the plastid. The protein localises to the chloroplast thylakoid membrane. The enzyme catalyses a plastoquinone + NADH + (n+1) H(+)(in) = a plastoquinol + NAD(+) + n H(+)(out). It carries out the reaction a plastoquinone + NADPH + (n+1) H(+)(in) = a plastoquinol + NADP(+) + n H(+)(out). In Nasturtium officinale (Watercress), this protein is NAD(P)H-quinone oxidoreductase chain 4, chloroplastic.